The following is a 1100-amino-acid chain: Collagen alpha-2(I) chain (1100 aa).

The disordered stretch occupies residues 1 to 982 (QYDGVKAPDP…PGPAGGGYDV (982 aa)). 3 stretches are compositionally biased toward low complexity: residues 122 to 170 (EPGA…AAGP), 200 to 209 (EPGPNGAVGP), and 216 to 237 (PGNNGLNGAKGAAGTPGVAGAP). Pro residues predominate over residues 239-249 (FPGPRGGPGPQ). Positions 251-261 (PQGAAGQRGLA) are enriched in low complexity. Over residues 268-277 (GVKGDGGPKG) the composition is skewed to gly residues. Composition is skewed to low complexity over residues 333–352 (MPGARGASGAAGPRGPPGDA), 358–385 (SGPAGLRGLPGSPGSSGPPGKEGAAGPA), 435–448 (APGPDGNNGATGAT), and 460–472 (QGASGAPGFQGLP). Positions 473 to 482 (GPAGGAGEAG) are enriched in gly residues. Positions 507–517 (NPGAAGASGPQ) are enriched in low complexity. The segment covering 530–557 (GTDGGKGEPGAAGAAGGPGHQGPGGMPG) has biased composition (gly residues). Positions 568-579 (KGEKGEGGHRGP) are enriched in basic and acidic residues. Low complexity predominate over residues 633-646 (PAGAPGFAGPPGAD). Residues 656-665 (GPSGGKGESG) show a composition bias toward gly residues. Composition is skewed to low complexity over residues 666 to 691 (PSGPAGPAGQSGPPGASGPAGPTGAR), 702 to 729 (FPGAAGRVGAAGPAGLVGPPGAAGPAGK), and 757 to 775 (SGEKGXPGTPGTSGPLGLQ). Residues 788-797 (GSPGGAGAVG) show a composition bias toward gly residues. Low complexity-rich tracts occupy residues 798–820 (EAGRVGPAGPAGARGAPGNLGLP) and 854–866 (AGPTGAAGRPGNR). Over residues 867-876 (GESGPGGAAG) the composition is skewed to gly residues. Positions 877–892 (AVGPAGARGAAGPSGP) are enriched in low complexity. Residues 893–907 (RGEKGVAGEKGERGM) show a composition bias toward basic and acidic residues. Over residues 916–935 (LQGMPGPSGPSGDTGSAGPN) the composition is skewed to low complexity. The 30-residue stretch at 1071–1100 (TRLPLLDLAPLDLGGADQEFGLDLGPVCFK) folds into the Fibrillar collagen NC1 domain.

The protein belongs to the fibrillar collagen family.

The protein localises to the secreted. It localises to the extracellular space. The protein resides in the extracellular matrix. The chain is Collagen alpha-2(I) chain from Epinephelus caninus (Dogtooth grouper).